The sequence spans 220 residues: Transcriptional regulatory protein LnrK (220 aa).

A Response regulatory domain is found at 3–119 (KIIITDDQDI…TIVKAVMTVH (117 aa)). 4-aspartylphosphate is present on Asp54. The 66-residue stretch at 151 to 216 (KPNELLDLTE…QAAIYSVRYG (66 aa)) folds into the HTH luxR-type domain. The H-T-H motif DNA-binding region spans 175-194 (NKEIAEKLYITEGTVKNHVS).

Phosphorylated by LnrJ.

The protein resides in the cytoplasm. Its function is as follows. Required for resistance to linearmycins, a family of antibiotic-specialized metabolites produced by some streptomycetes. Member of the two-component regulatory system LnrJ/LnrK, which induces expression of the LnrLMN ABC transporter in response to linearmycins and other polyenes. Probably binds to the promoter region of the lnrLMN operon and directly regulates its expression. May also promote biofilm formation. This Bacillus subtilis (strain 168) protein is Transcriptional regulatory protein LnrK.